A 164-amino-acid polypeptide reads, in one-letter code: Cell division protein SepF (164 aa).

Residues tyrosine 21–glutamate 71 form a disordered region. The span at glutamine 22 to valine 54 shows a compositional bias: low complexity.

This sequence belongs to the SepF family. As to quaternary structure, homodimer. Interacts with FtsZ.

The protein resides in the cytoplasm. Its function is as follows. Cell division protein that is part of the divisome complex and is recruited early to the Z-ring. Probably stimulates Z-ring formation, perhaps through the cross-linking of FtsZ protofilaments. Its function overlaps with FtsA. The polypeptide is Cell division protein SepF (Clavibacter michiganensis subsp. michiganensis (strain NCPPB 382)).